A 360-amino-acid chain; its full sequence is Acetylxylan esterase / glucomannan deacetylase (360 aa).

Residues 1–21 (MKPHALIGLLAGMLLSSSLYA) form the signal peptide. Residue Ser151 is the Nucleophile of the active site.

Belongs to the carbohydrate esterase 2 (CE2) family.

The protein localises to the secreted. The catalysed reaction is Deacetylation of xylans and xylo-oligosaccharides.. It participates in glycan degradation; xylan degradation. In terms of biological role, involved in the degradation of plant cell wall polysaccharides. Catalyzes the deacetylation of acetylated birchwood xylan and glucomannan, with a large preference for the latter, and of the synthetic substrate 4-nitrophenyl acetate (4-NPAc). The chain is Acetylxylan esterase / glucomannan deacetylase from Cellvibrio japonicus (strain Ueda107) (Pseudomonas fluorescens subsp. cellulosa).